The primary structure comprises 202 residues: MPGQQRRGGGSGGSDRRERRDRSGGGPAQEKTAYVERVVAINRVAKVVKGGRRFSFTALVVVGDADGTVGVGYGKAKEVPAAIAKGVEEAKKHFFKVPRIGSTIPHPVQGEEAAGVVLLKPASPGTGVIAGGPVRAVLECAGVHDVLSKSLGSSNPINIVHATVAALRGLMRPEEIAARRGLPLEDVAPPAMLRARAAGVGA.

Gly residues predominate over residues 1–13 (MPGQQRRGGGSGG). The interval 1-31 (MPGQQRRGGGSGGSDRRERRDRSGGGPAQEK) is disordered. Residues 14–23 (SDRRERRDRS) are compositionally biased toward basic and acidic residues. The S5 DRBM domain occupies 34–97 (YVERVVAINR…EEAKKHFFKV (64 aa)).

It belongs to the universal ribosomal protein uS5 family. In terms of assembly, part of the 30S ribosomal subunit. Contacts proteins S4 and S8.

With S4 and S12 plays an important role in translational accuracy. Its function is as follows. Located at the back of the 30S subunit body where it stabilizes the conformation of the head with respect to the body. The chain is Small ribosomal subunit protein uS5 from Parafrankia sp. (strain EAN1pec).